A 59-amino-acid chain; its full sequence is Mitochondrial sheath formation-associated protein (59 aa).

The Mitochondrial intermembrane segment spans residues 1–6 (MIVLGW). 2 helical membrane passes run 2–22 (IVLG…FPEL) and 7–23 (MFFV…PELM). The Cytoplasmic segment spans residues 24-40 (PPTLKWQERWPVQESKT).

Interacts with VDAC3.

Its subcellular location is the mitochondrion outer membrane. Functionally, regulates sperm development. May be involved in mitochondrial sheath formation. This Homo sapiens (Human) protein is Mitochondrial sheath formation-associated protein.